A 425-amino-acid chain; its full sequence is Protein disulfide isomerase-like 5-3 (425 aa).

Residues 1–28 (MGKPTLPPVVVVVVLLLLVVVLPATTCG) form the signal peptide. The 125-residue stretch at 29-153 (ADAGGGGEAE…LVENLKKLVA (125 aa)) folds into the Thioredoxin domain. Catalysis depends on nucleophile residues C75 and C78. C75 and C78 are oxidised to a cystine. Residues 386-406 (LLGVNAVYILVFLVAVLVLLM) form a helical membrane-spanning segment.

This sequence belongs to the protein disulfide isomerase family.

The protein resides in the membrane. Acts as a protein-folding catalyst that interacts with nascent polypeptides to catalyze the formation, isomerization, and reduction or oxidation of disulfide bonds. May play a role in storage protein biogenesis. The protein is Protein disulfide isomerase-like 5-3 (PDIL5-3) of Oryza sativa subsp. japonica (Rice).